Reading from the N-terminus, the 418-residue chain is Serpin A9 (418 aa).

A signal peptide spans Met1 to Ser25. N-linked (GlcNAc...) asparagine glycans are attached at residues Asn103, Asn213, and Asn224.

Belongs to the serpin family.

It is found in the secreted. This chain is Serpin A9 (Serpina9), found in Mus musculus (Mouse).